A 214-amino-acid chain; its full sequence is Adenylate kinase (214 aa).

10–15 (GSGKGT) is an ATP binding site. The tract at residues 30 to 59 (STGDMLRAAVREGTPLGMEAKKIMDAGQLV) is NMP. Residues Thr-31, Arg-36, 57–59 (QLV), 85–88 (GFPR), and Gln-92 each bind AMP. Residues 122-159 (GRRVHPASGRTYHVVFNPPKVEGRDDETGEPLVQREDD) form an LID region. Residues Arg-123 and 132–133 (TY) each bind ATP. Residues Arg-156 and Arg-167 each contribute to the AMP site. An ATP-binding site is contributed by Gly-200.

This sequence belongs to the adenylate kinase family. In terms of assembly, monomer.

It is found in the cytoplasm. The catalysed reaction is AMP + ATP = 2 ADP. It functions in the pathway purine metabolism; AMP biosynthesis via salvage pathway; AMP from ADP: step 1/1. Catalyzes the reversible transfer of the terminal phosphate group between ATP and AMP. Plays an important role in cellular energy homeostasis and in adenine nucleotide metabolism. The sequence is that of Adenylate kinase from Methylococcus capsulatus (strain ATCC 33009 / NCIMB 11132 / Bath).